The primary structure comprises 947 residues: Bifunctional glutamine synthetase adenylyltransferase/adenylyl-removing enzyme (947 aa).

The interval 1–440 (MTPLSSPLSQ…VFNELIGDDE (440 aa)) is adenylyl removase. The segment at 450–947 (SEPWREVWQD…ASWRKWLVAV (498 aa)) is adenylyl transferase.

It belongs to the GlnE family. The cofactor is Mg(2+).

It catalyses the reaction [glutamine synthetase]-O(4)-(5'-adenylyl)-L-tyrosine + phosphate = [glutamine synthetase]-L-tyrosine + ADP. The catalysed reaction is [glutamine synthetase]-L-tyrosine + ATP = [glutamine synthetase]-O(4)-(5'-adenylyl)-L-tyrosine + diphosphate. Involved in the regulation of glutamine synthetase GlnA, a key enzyme in the process to assimilate ammonia. When cellular nitrogen levels are high, the C-terminal adenylyl transferase (AT) inactivates GlnA by covalent transfer of an adenylyl group from ATP to specific tyrosine residue of GlnA, thus reducing its activity. Conversely, when nitrogen levels are low, the N-terminal adenylyl removase (AR) activates GlnA by removing the adenylyl group by phosphorolysis, increasing its activity. The regulatory region of GlnE binds the signal transduction protein PII (GlnB) which indicates the nitrogen status of the cell. In Salmonella gallinarum (strain 287/91 / NCTC 13346), this protein is Bifunctional glutamine synthetase adenylyltransferase/adenylyl-removing enzyme.